The following is a 419-amino-acid chain: Coiled-coil domain-containing protein 85C (419 aa).

N-acetylalanine is present on alanine 2. Coiled coils occupy residues 22–88 and 118–159; these read ELLR…RELC and HEVA…AALA. Disordered stretches follow at residues 162-268 and 307-348; these read GAAS…DPSS and HSES…AGQK. Positions 164–175 are enriched in gly residues; it reads ASGGGGGGGGAG. The span at 176-189 shows a compositional bias: low complexity; it reads SRSSIDSQASLSGP. Serine 178 is subject to Phosphoserine. Over residues 224–233 the composition is skewed to pro residues; the sequence is PPPLLPPGPH. Position 246 is a phosphoserine (serine 246). Polar residues predominate over residues 307 to 325; the sequence is HSESQLASLPPSYQDSLQN. Pro residues predominate over residues 329–338; that stretch reads CPAPELPSPP.

It belongs to the CCDC85 family. In terms of assembly, may interact with ARVCF, CTNND1, CTNND2 and PKP4.

The protein resides in the cell junction. It is found in the tight junction. It localises to the adherens junction. Functionally, may play a role in cell-cell adhesion and epithelium development through its interaction with proteins of the beta-catenin family. May play an important role in cortical development, especially in the maintenance of radial glia. This Homo sapiens (Human) protein is Coiled-coil domain-containing protein 85C (CCDC85C).